The sequence spans 232 residues: Modulator of macroautophagy TMEM150B (232 aa).

The Cytoplasmic portion of the chain corresponds to 1–6 (MWAWAL). A helical transmembrane segment spans residues 7-27 (LPVFLAVFGTVGLWAVYAIAV). The Extracellular portion of the chain corresponds to 28-50 (SNNSVNITIEFPYISTCGAYTPQ). Residues Asn29 and Asn33 are each glycosylated (N-linked (GlcNAc...) asparagine). The chain crosses the membrane as a helical span at residues 51 to 71 (SCLFAQICNICCVLALWIVVI). The Cytoplasmic segment spans residues 72–83 (RFQQIRDLGRSS). A helical transmembrane segment spans residues 84–104 (HLNTAGLVLGFISSIGISILG). Residues 105–115 (NFQQTIIQEVH) lie on the Extracellular side of the membrane. A helical transmembrane segment spans residues 116-136 (LLGALMAFFLGLAYFWIQAFI). Residues 137–153 (TYFSPPSRDNKWLVPVR) are Cytoplasmic-facing. Residues 154–174 (FVLCSQCTCMVICMFVLHSTG) traverse the membrane as a helical segment. Residues 175–177 (FRS) lie on the Extracellular side of the membrane. The helical transmembrane segment at 178–198 (AAAICEWILVMCFFALFGVFA) threads the bilayer. Residues 199–232 (AEFRHIDFHKLTVQKEGLKVANNDNVVWTVQDVQ) lie on the Cytoplasmic side of the membrane.

Belongs to the DRAM/TMEM150 family.

The protein resides in the cell membrane. The protein localises to the endosome membrane. It localises to the cytoplasmic vesicle. Its subcellular location is the autophagosome membrane. Its function is as follows. Modulator of macroautophagy that causes accumulation of autophagosomes under basal conditions and enhances autophagic flux. Represses cell death and promotes long-term clonogenic survival of cells grown in the absence of glucose in a macroautophagy-independent manner. May have some role in extracellular matrix engulfment or growth factor receptor recycling, both of which can modulate cell survival. The protein is Modulator of macroautophagy TMEM150B of Danio rerio (Zebrafish).